The primary structure comprises 257 residues: Cilia- and flagella-associated protein 300 (257 aa).

Belongs to the CFAP300 family.

The protein localises to the cytoplasm. The protein resides in the cytoskeleton. It localises to the flagellum axoneme. Functionally, cilium- and flagellum-specific protein that plays a role in axonemal structure organization and motility. Plays a role in outer and inner dynein arm assembly. In Chlamydomonas reinhardtii (Chlamydomonas smithii), this protein is Cilia- and flagella-associated protein 300.